The sequence spans 336 residues: Putative transcription factor avaE (336 aa).

The WRKY DNA-binding region spans T32–P100.

The protein resides in the nucleus. It participates in secondary metabolite biosynthesis. Putative transcription factor; part of the cluster that mediates the biosynthesis of a highly modified cyclo-arginine-tryptophan dipeptide (cRW). This Aspergillus versicolor protein is Putative transcription factor avaE.